A 320-amino-acid polypeptide reads, in one-letter code: MACQNNLVVKQIIDLYDQISKLKSLKPSKNVDTLFGQLVSTCLPTDTNIDVTNMCEEVKDMRANLIKLCGEAEGYLEQHFSTILGSLQEDQNPLDHLHIFPYYSNYLKLGKLEFDLLSQHSSHVPTKIAFVGSGPMPLTSIVLAKFHLPNTTFHNFDIDSHANTLASNLVSRDPDLSKRMIFHTTDVLNATEGLDQYDVVFLAALVGMDKESKVKAIEHLEKHMAPGAVLMLRSAHALRAFLYPIVDSSDLKGFQLLTIYHPTDDVVNSVVIARKLGGPTTPGVNGTRGCMFMPCNCSKIHAIMNNRGKKNMIEEFSAIE.

The protein belongs to the nicotianamine synthase (NAS)-like family. As to expression, in shoots and roots.

It carries out the reaction 3 S-adenosyl-L-methionine = nicotianamine + 3 S-methyl-5'-thioadenosine + 3 H(+). Its function is as follows. Synthesizes nicotianamine, a polyamine which serves as a sensor for the physiological iron status within the plant, and/or might be involved in the transport of iron. This is Nicotianamine synthase 1 (NAS1) from Arabidopsis thaliana (Mouse-ear cress).